A 468-amino-acid chain; its full sequence is MRAQWIARRHGQPNVTQMHHARRGSVTEEMAHVAAREKLDPELVRQEVARGRMVIPANLKHPELEPIAIGIAATCKINANIGNSAVTSDVDEELRKLSVCLRHGADTVMDLSTGGDIPLIRENILRHSPIPVGTVPIYECLAHVKDVVDLTPRGLLEIIEAQAAQGVDYMTIHAGVLRDIVPMAAGRITGIVSRGGALLARWMAANGQENPLYTHFDEICEIFKRYDVTFSLGDGLRPGCLADASDEAQFAELKVLGELTRKAWAHDVQVMVEGPGHVPLDQIPMNMQKERELCDEAPFYVLGPLVTDIAPGYDHITSAIGAAVAAQHGASMLCYVTPAEHLGLPDAEDVRQGIVAYKIAAHAADVARQRPGARDRDDALSRARYAFDWKRQFELSLDPDAARTKHDATLPQEAAKSAEFCSMCGPKFCSMRIHSHLGDGAAPGAALPCADAAPSQPTRAGGPLPIAR.

Substrate is bound by residues N80, M109, Y138, H173, 193–195 (SRG), 234–237 (DGLR), and E273. H277 contributes to the Zn(2+) binding site. Position 300 (Y300) interacts with substrate. H341 lines the Zn(2+) pocket. [4Fe-4S] cluster is bound by residues C421, C424, and C429.

This sequence belongs to the ThiC family. In terms of assembly, homodimer. The cofactor is [4Fe-4S] cluster.

It catalyses the reaction 5-amino-1-(5-phospho-beta-D-ribosyl)imidazole + S-adenosyl-L-methionine = 4-amino-2-methyl-5-(phosphooxymethyl)pyrimidine + CO + 5'-deoxyadenosine + formate + L-methionine + 3 H(+). Its pathway is cofactor biosynthesis; thiamine diphosphate biosynthesis. In terms of biological role, catalyzes the synthesis of the hydroxymethylpyrimidine phosphate (HMP-P) moiety of thiamine from aminoimidazole ribotide (AIR) in a radical S-adenosyl-L-methionine (SAM)-dependent reaction. In Anaeromyxobacter sp. (strain Fw109-5), this protein is Phosphomethylpyrimidine synthase.